A 194-amino-acid polypeptide reads, in one-letter code: Cytochrome c biogenesis ATP-binding export protein CcmA (194 aa).

The ABC transporter domain occupies 5–194; sequence LALDGVACIR…LDELVMGVLA (190 aa). 37 to 44 lines the ATP pocket; sequence GPNGAGKS.

The protein belongs to the ABC transporter superfamily. CcmA exporter (TC 3.A.1.107) family. As to quaternary structure, the complex is composed of two ATP-binding proteins (CcmA) and two transmembrane proteins (CcmB).

The protein localises to the cell inner membrane. The catalysed reaction is heme b(in) + ATP + H2O = heme b(out) + ADP + phosphate + H(+). Its function is as follows. Part of the ABC transporter complex CcmAB involved in the biogenesis of c-type cytochromes; once thought to export heme, this seems not to be the case, but its exact role is uncertain. Responsible for energy coupling to the transport system. This chain is Cytochrome c biogenesis ATP-binding export protein CcmA, found in Sphingopyxis alaskensis (strain DSM 13593 / LMG 18877 / RB2256) (Sphingomonas alaskensis).